We begin with the raw amino-acid sequence, 327 residues long: Phenylalanine--tRNA ligase alpha subunit (327 aa).

Position 252 (glutamate 252) interacts with Mg(2+).

Belongs to the class-II aminoacyl-tRNA synthetase family. Phe-tRNA synthetase alpha subunit type 1 subfamily. As to quaternary structure, tetramer of two alpha and two beta subunits. The cofactor is Mg(2+).

It is found in the cytoplasm. It carries out the reaction tRNA(Phe) + L-phenylalanine + ATP = L-phenylalanyl-tRNA(Phe) + AMP + diphosphate + H(+). The polypeptide is Phenylalanine--tRNA ligase alpha subunit (Shewanella denitrificans (strain OS217 / ATCC BAA-1090 / DSM 15013)).